A 291-amino-acid chain; its full sequence is Elongation factor Ts (291 aa).

An involved in Mg(2+) ion dislocation from EF-Tu region spans residues 84–87; sequence TDFV.

It belongs to the EF-Ts family.

Its subcellular location is the cytoplasm. Associates with the EF-Tu.GDP complex and induces the exchange of GDP to GTP. It remains bound to the aminoacyl-tRNA.EF-Tu.GTP complex up to the GTP hydrolysis stage on the ribosome. The polypeptide is Elongation factor Ts (Bifidobacterium adolescentis (strain ATCC 15703 / DSM 20083 / NCTC 11814 / E194a)).